Here is a 1322-residue protein sequence, read N- to C-terminus: FERM and PDZ domain-containing protein 4 (1322 aa).

The WW domain occupies 33-66 (QVPPYGWEMTANRDGRDYFINHMTQAIPFDDPRL). Residues 78–155 (KVEMRRDPVL…SILLTVIQPY (78 aa)) form the PDZ domain. Residues 204–519 (NVLKVYLENG…GYYRLLVDSR (316 aa)) form the FERM domain. Disordered regions lie at residues 809–847 (APPP…EIPV), 900–927 (SPES…TAQK), 952–983 (EFPA…PPKV), 1027–1080 (RKSK…STFN), 1105–1148 (SGLE…GQGD), 1160–1180 (AKDL…PSKL), and 1207–1227 (HFSL…TGSS). The span at 902–921 (ESSSDSGNETNSSEMTESSE) shows a compositional bias: low complexity. Low complexity predominate over residues 1041-1054 (NGNTTGKKQQGTKT). The span at 1067–1080 (TVSSRDSQHLSTFN) shows a compositional bias: polar residues. The span at 1207-1217 (HFSLQSSQGSS) shows a compositional bias: polar residues.

As to quaternary structure, interacts (via C-terminus) with DLG1, DLG2, DLG3 and DLG4/PSD95. Interacts (via N-terminus) with ARHGEF7; the interaction is mediated by the PDZ domain. Interacts with GPSM2 (via TPR repeat region).

It localises to the cell projection. The protein resides in the dendritic spine. Its function is as follows. Positive regulator of dendritic spine morphogenesis and density. Required for the maintenance of excitatory synaptic transmission. Binds phosphatidylinositol 4,5-bisphosphate. This chain is FERM and PDZ domain-containing protein 4 (FRMPD4), found in Homo sapiens (Human).